The primary structure comprises 314 residues: MATFPVVDLSLVNGEERAATLEKINDACENWGFFELVNHGMSTELLDTVEKMTKDHYKKTMEQRFKEMVAAKGLDDVQSEIHDLDWESTFFLRHLPSSNISEIPDLEEEYRKTMKEFAVELEKLAEKLLDLLCENLGLEKGYLKKVFYGSKGPNFGTKVSNYPPCPKPDLIKGLRAHSDAGGIILLFQDDKVSGLQLLKDGEWVDVPPMHHSIVINLGDQIEVITNGKYKSVMHRVIAQSDGTRMSIASFYNPGNDSFISPAPAVLEKKTEDAPTYPKFVFDDYMKLYSGLKFQAKEPRFEAMKAKESTPVATA.

The Fe2OG dioxygenase domain maps to 153–253 (PNFGTKVSNY…RMSIASFYNP (101 aa)). The Fe cation site is built by histidine 177, aspartate 179, and histidine 234.

The protein belongs to the iron/ascorbate-dependent oxidoreductase family. As to quaternary structure, monomer. Requires Fe cation as cofactor.

The catalysed reaction is 1-aminocyclopropane-1-carboxylate + L-ascorbate + O2 = ethene + L-dehydroascorbate + hydrogen cyanide + CO2 + 2 H2O. Its pathway is alkene biosynthesis; ethylene biosynthesis via S-adenosyl-L-methionine; ethylene from S-adenosyl-L-methionine: step 2/2. This Malus domestica (Apple) protein is 1-aminocyclopropane-1-carboxylate oxidase 1.